Consider the following 897-residue polypeptide: DNA mismatch repair protein MutS (897 aa).

Residue 654–661 coordinates ATP; that stretch reads GPNMAGKS.

The protein belongs to the DNA mismatch repair MutS family.

This protein is involved in the repair of mismatches in DNA. It is possible that it carries out the mismatch recognition step. This protein has a weak ATPase activity. This Maricaulis maris (strain MCS10) (Caulobacter maris) protein is DNA mismatch repair protein MutS.